Here is a 153-residue protein sequence, read N- to C-terminus: Membrane protein FAM174B (153 aa).

Residues 1 to 27 (MSALPPQPPPPLLLLLLALLAAPAALA) form the signal peptide. The Extracellular portion of the chain corresponds to 28-84 (RRAESASASQPEAEHQPPPGPGNATQLGSGMAGGGSSNSSVDAVVTRISSLLRDLPT). A disordered region spans residues 31 to 67 (ESASASQPEAEHQPPPGPGNATQLGSGMAGGGSSNSS). Asn50 is a glycosylation site (N-linked (GlcNAc...) asparagine). A helical membrane pass occupies residues 85–105 (LKATVIVACAFSALLIACLLL). Over 106–153 (RVFRLGKRLKKTRKYDIITTPAERVEMAPLNEEDDEDEDSTVFDIKYR) the chain is Cytoplasmic.

This sequence belongs to the FAM174 family.

The protein localises to the cell membrane. It localises to the golgi apparatus. In terms of biological role, essential for Golgi structural integrity. The chain is Membrane protein FAM174B (Fam174b) from Mus musculus (Mouse).